Here is a 985-residue protein sequence, read N- to C-terminus: Alpha-glucosidase (985 aa).

The signal sequence occupies residues 1 to 25 (MVKLTHLLARAWLVPLAYGASQSLL). A glycan (O-linked (Man) threonine) is linked at threonine 36. Residues asparagine 124, asparagine 143, asparagine 218, asparagine 347, and asparagine 422 are each glycosylated (N-linked (GlcNAc...) asparagine). The active-site Nucleophile is the aspartate 490. Residue glutamate 493 is part of the active site. N-linked (GlcNAc...) asparagine glycosylation is found at asparagine 506, asparagine 534, and asparagine 537. Serine 545 and serine 550 each carry an O-linked (Man) serine glycan. O-linked (Man) threonine glycosylation is present at threonine 559. O-linked (Man) serine glycosylation occurs at serine 560. The O-linked (Man) threonine glycan is linked to threonine 561. Residue serine 562 is glycosylated (O-linked (Man) serine). Threonine 571 is a glycosylation site (O-linked (Man) threonine). Asparagine 601 and asparagine 623 each carry an N-linked (GlcNAc...) asparagine glycan. Aspartate 660 acts as the Proton donor in catalysis. N-linked (GlcNAc...) asparagine glycans are attached at residues asparagine 835 and asparagine 881. O-linked (Man) serine glycosylation occurs at serine 895. Asparagine 899, asparagine 957, and asparagine 970 each carry an N-linked (GlcNAc...) asparagine glycan.

The protein belongs to the glycosyl hydrolase 31 family. Post-translationally, the O-linked saccharide is not identified, but is probably mannose.

It catalyses the reaction Hydrolysis of terminal, non-reducing (1-&gt;4)-linked alpha-D-glucose residues with release of alpha-D-glucose.. Functionally, hydrolyzes malto-oligosaccharides, but has a low activity toward soluble starch. The polypeptide is Alpha-glucosidase (aglA) (Aspergillus niger).